Here is a 361-residue protein sequence, read N- to C-terminus: Phosphoserine aminotransferase (361 aa).

L-glutamate contacts are provided by Ser-9 and Arg-42. Residues 76–77 (AR), Trp-102, Thr-153, Asp-173, and Gln-196 contribute to the pyridoxal 5'-phosphate site. At Lys-197 the chain carries N6-(pyridoxal phosphate)lysine. 238 to 239 (NT) is a pyridoxal 5'-phosphate binding site.

The protein belongs to the class-V pyridoxal-phosphate-dependent aminotransferase family. SerC subfamily. Homodimer. It depends on pyridoxal 5'-phosphate as a cofactor.

The protein resides in the cytoplasm. The enzyme catalyses O-phospho-L-serine + 2-oxoglutarate = 3-phosphooxypyruvate + L-glutamate. The catalysed reaction is 4-(phosphooxy)-L-threonine + 2-oxoglutarate = (R)-3-hydroxy-2-oxo-4-phosphooxybutanoate + L-glutamate. The protein operates within amino-acid biosynthesis; L-serine biosynthesis; L-serine from 3-phospho-D-glycerate: step 2/3. It functions in the pathway cofactor biosynthesis; pyridoxine 5'-phosphate biosynthesis; pyridoxine 5'-phosphate from D-erythrose 4-phosphate: step 3/5. Functionally, catalyzes the reversible conversion of 3-phosphohydroxypyruvate to phosphoserine and of 3-hydroxy-2-oxo-4-phosphonooxybutanoate to phosphohydroxythreonine. This Sodalis glossinidius (strain morsitans) protein is Phosphoserine aminotransferase.